The primary structure comprises 236 residues: 2,3,4,5-tetrahydropyridine-2,6-dicarboxylate N-acetyltransferase (236 aa).

This sequence belongs to the transferase hexapeptide repeat family. DapH subfamily.

The catalysed reaction is (S)-2,3,4,5-tetrahydrodipicolinate + acetyl-CoA + H2O = L-2-acetamido-6-oxoheptanedioate + CoA. Its pathway is amino-acid biosynthesis; L-lysine biosynthesis via DAP pathway; LL-2,6-diaminopimelate from (S)-tetrahydrodipicolinate (acetylase route): step 1/3. Catalyzes the transfer of an acetyl group from acetyl-CoA to tetrahydrodipicolinate. This Geobacillus kaustophilus (strain HTA426) protein is 2,3,4,5-tetrahydropyridine-2,6-dicarboxylate N-acetyltransferase.